The chain runs to 1115 residues: Carbamoyl phosphate synthase large chain (1115 aa).

The segment at 1–407 (MPRRTDLHHV…ALGKVMRSLE (407 aa)) is carboxyphosphate synthetic domain. Arg134, Arg174, Gly180, Gly181, Glu213, Ile215, Glu220, Gly246, Val247, His248, Gln290, and Glu304 together coordinate ATP. Positions 138–333 (KDIVAKAGGE…IAKIAAKLAI (196 aa)) constitute an ATP-grasp 1 domain. Gln290, Glu304, and Asn306 together coordinate Mg(2+). The Mn(2+) site is built by Gln290, Glu304, and Asn306. Residues 408 to 559 (TTRAGFWTAP…ELDPAAETEV (152 aa)) are oligomerization domain. The interval 560 to 965 (APQTERPKVL…AFAKSQTAAY (406 aa)) is carbamoyl phosphate synthetic domain. The ATP-grasp 2 domain maps to 693–884 (GDLLSAAGLP…LAKACARIML (192 aa)). ATP contacts are provided by Arg729, Arg768, Leu770, Glu775, Gly800, Ile801, His802, Ser803, Gln843, and Glu855. Positions 843, 855, and 857 each coordinate Mg(2+). 3 residues coordinate Mn(2+): Gln843, Glu855, and Asn857. Positions 966–1113 (GSLPAQGTVF…QELHRVIGGV (148 aa)) constitute an MGS-like domain. Residues 966 to 1115 (GSLPAQGTVF…LHRVIGGVER (150 aa)) are allosteric domain.

Belongs to the CarB family. In terms of assembly, composed of two chains; the small (or glutamine) chain promotes the hydrolysis of glutamine to ammonia, which is used by the large (or ammonia) chain to synthesize carbamoyl phosphate. Tetramer of heterodimers (alpha,beta)4. Mg(2+) serves as cofactor. Requires Mn(2+) as cofactor.

It catalyses the reaction hydrogencarbonate + L-glutamine + 2 ATP + H2O = carbamoyl phosphate + L-glutamate + 2 ADP + phosphate + 2 H(+). The enzyme catalyses hydrogencarbonate + NH4(+) + 2 ATP = carbamoyl phosphate + 2 ADP + phosphate + 2 H(+). It participates in amino-acid biosynthesis; L-arginine biosynthesis; carbamoyl phosphate from bicarbonate: step 1/1. The protein operates within pyrimidine metabolism; UMP biosynthesis via de novo pathway; (S)-dihydroorotate from bicarbonate: step 1/3. Its function is as follows. Large subunit of the glutamine-dependent carbamoyl phosphate synthetase (CPSase). CPSase catalyzes the formation of carbamoyl phosphate from the ammonia moiety of glutamine, carbonate, and phosphate donated by ATP, constituting the first step of 2 biosynthetic pathways, one leading to arginine and/or urea and the other to pyrimidine nucleotides. The large subunit (synthetase) binds the substrates ammonia (free or transferred from glutamine from the small subunit), hydrogencarbonate and ATP and carries out an ATP-coupled ligase reaction, activating hydrogencarbonate by forming carboxy phosphate which reacts with ammonia to form carbamoyl phosphate. The polypeptide is Carbamoyl phosphate synthase large chain (Mycobacterium tuberculosis (strain CDC 1551 / Oshkosh)).